We begin with the raw amino-acid sequence, 1167 residues long: ATP-dependent helicase/nuclease subunit A (1167 aa).

The UvrD-like helicase ATP-binding domain maps to lysine 2–arginine 451. Alanine 23–threonine 30 is an ATP binding site. A UvrD-like helicase C-terminal domain is found at lysine 478–glycine 768.

This sequence belongs to the helicase family. AddA subfamily. In terms of assembly, heterodimer of AddA and AddB/RexB. The cofactor is Mg(2+).

It catalyses the reaction Couples ATP hydrolysis with the unwinding of duplex DNA by translocating in the 3'-5' direction.. It carries out the reaction ATP + H2O = ADP + phosphate + H(+). Functionally, the heterodimer acts as both an ATP-dependent DNA helicase and an ATP-dependent, dual-direction single-stranded exonuclease. Recognizes the chi site generating a DNA molecule suitable for the initiation of homologous recombination. The AddA nuclease domain is required for chi fragment generation; this subunit has the helicase and 3' -&gt; 5' nuclease activities. This chain is ATP-dependent helicase/nuclease subunit A, found in Carboxydothermus hydrogenoformans (strain ATCC BAA-161 / DSM 6008 / Z-2901).